The following is a 758-amino-acid chain: MSEVLPADSGVDTLAVFMASSGTTDVTNRNSPATPPNTLNLRSSHNELLNAEIKHTETKNSTPPKCRKKYALTNIQAAMGLSDPAAQPLLGNGSANIKLVKNGENQLRKAAEQGQQDPNKNLSPTAVINITSEKLEGKEPHPQDSSSCEILPSQPRRTKSFLNYYADLETSARELEQNRGNHHGTAEEKSQPVQGQASTIIGNGDLLLQKPNRPQSSPEDGQVATVSSSPETKKDHPKTGAKTDCALHRIQNLAPSDEESSWTTLSQDSASPSSPDETDIWSDHSFQTDPDLPPGWKRVSDIAGTYYWHIPTGTTQWERPVSIPADLQGSRKGSLSSVTPSPTPENEKQPWSDFAVLNGGKINSDIWKDLHAATVNPDPSLKEFEGATLRYASLKLRNAPHPDDDDSCSINSDPEAKCFAVRSLGWVEMAEEDLAPGKSSVAVNNCIRQLSYCKNDIRDTVGIWGEGKDMYLILENDMLSLVDPMDRSVLHSQPIVSIRVWGVGRDNGRDFAYVARDKDTRILKCHVFRCDTPAKAIATSLHEICSKIMAERKNAKALACSSLQERANVNLDVPLQVDFPTPKTELVQKFHVQYLGMLPVDKPVGMDILNSAIENLMTSSNKEDWLSVNMNVADATVTVISEKNEEEVLVECRVRFLSFMGVGKDVHTFAFIMDTGNQRFECHVFWCEPNAGNVSEAVQAACMLRYQKCLVARPPSQKVRPPPPPADSVTRRVTTNVKRGVLSLIDTLKQKRPVTEMP.

Residue S123 is modified to Phosphoserine. The interval 134–154 (KLEGKEPHPQDSSSCEILPSQ) is disordered. S160 is subject to Phosphoserine. The span at 176-190 (EQNRGNHHGTAEEKS) shows a compositional bias: basic and acidic residues. 3 disordered regions span residues 176–195 (EQNRGNHHGTAEEKSQPVQG), 206–295 (LLLQ…LPPG), and 326–351 (DLQGSRKGSLSSVTPSPTPENEKQPW). 2 stretches are compositionally biased toward polar residues: residues 212-230 (NRPQSSPEDGQVATVSSSP) and 261-275 (SWTTLSQDSASPSSP). In terms of domain architecture, WW spans 290-322 (PDLPPGWKRVSDIAGTYYWHIPTGTTQWERPVS). Residues 331-340 (RKGSLSSVTP) show a composition bias toward polar residues. Phosphoserine occurs at positions 334, 409, and 412. PID domains follow at residues 413 to 578 (DPEA…LQVD) and 584 to 736 (TELV…VTTN).

Interacts (via C-terminus) with APP (via C-terminus). Interacts with APLP2 (via cytoplasmic domain). As to expression, widely expressed.

The protein localises to the endoplasmic reticulum. The protein resides in the golgi apparatus. It is found in the early endosome. Functionally, plays a role in the maintenance of lens transparency, and may also play a role in muscle cell strength. Involved in hippocampal neurite branching and neuromuscular junction formation, as a result plays a role in spatial memory functioning. Activates transcription of APP. The polypeptide is Amyloid beta precursor protein binding family B member 2 (Homo sapiens (Human)).